The sequence spans 101 residues: Enhancer of yellow 2 transcription factor (101 aa).

It belongs to the ENY2 family. In terms of assembly, component of the nuclear pore complex (NPC)-associated AMEX complex (anchoring and mRNA export complex), composed of at least e(y)2 and xmas-2. Component of the SAGA transcription coactivator-HAT complexes, at least composed of Ada2b, e(y)2, Pcaf/Gcn5, Taf10 and Nipped-A/Trrap. Within the SAGA complex, e(y)2, Sgf11, and not/nonstop form an additional subcomplex of SAGA called the DUB module (deubiquitination module). Component of the THO complex, composed of at least e(y)2, HPR1, THO2, THOC5, THOC6 and THOC7. Interacts with e(y)1. Interacts with su(Hw) (via zinc fingers). Interacts with xmas-2; required for localization to the nuclear periphery. Interacts with the nuclear pore complex (NPC).

The protein resides in the nucleus. It localises to the nucleoplasm. The protein localises to the cytoplasm. In terms of biological role, involved in mRNA export coupled transcription activation by association with both the AMEX and the SAGA complexes. The SAGA complex is a multiprotein complex that activates transcription by remodeling chromatin and mediating histone acetylation and deubiquitination. Within the SAGA complex, participates in a subcomplex that specifically deubiquitinates histone H2B. The SAGA complex is recruited to specific gene promoters by activators, where it is required for transcription. Required for nuclear receptor-mediated transactivation. Involved in transcription elongation by recruiting the THO complex onto nascent mRNA. The AMEX complex functions in docking export-competent ribonucleoprotein particles (mRNPs) to the nuclear entrance of the nuclear pore complex (nuclear basket). AMEX participates in mRNA export and accurate chromatin positioning in the nucleus by tethering genes to the nuclear periphery. This Drosophila yakuba (Fruit fly) protein is Enhancer of yellow 2 transcription factor.